The sequence spans 207 residues: Macrophage immunometabolism regulator (207 aa).

Position 1 is an N-acetylmethionine (methionine 1). Positions 1 to 41 (MEVDINGDSRSTLTTLPLPVAEGSSPGKAEAEKPRCSSTPC) are disordered. Serine 25 and serine 167 each carry phosphoserine.

The protein belongs to the UNC119-binding protein family. Interacts with UNC119 and UNC119B; interaction preferentially takes place when UNC119 and UNC119B are unliganded with myristoylated proteins. In terms of tissue distribution, highly expressed in photoreceptors.

Its subcellular location is the cytoplasm. The protein resides in the cell projection. It localises to the cilium. Functionally, regulates the macrophage function, by enhancing the resolution of inflammation and wound repair functions mediated by M2 macrophages. The regulation of macrophage function is, due at least in part, to its ability to inhibit glycolysis. May also play a role in trafficking of proteins via its interaction with UNC119 and UNC119B cargo adapters: may help the release of UNC119 and UNC119B cargo or the recycling of UNC119 and UNC119B. May play a role in ciliary membrane localization via its interaction with UNC119B and protein transport into photoreceptor cells. This is Macrophage immunometabolism regulator from Mus musculus (Mouse).